A 261-amino-acid polypeptide reads, in one-letter code: tRNA pseudouridine synthase A (261 aa).

Asp51 acts as the Nucleophile in catalysis. Tyr109 contacts substrate.

This sequence belongs to the tRNA pseudouridine synthase TruA family. In terms of assembly, homodimer.

The enzyme catalyses uridine(38/39/40) in tRNA = pseudouridine(38/39/40) in tRNA. Its function is as follows. Formation of pseudouridine at positions 38, 39 and 40 in the anticodon stem and loop of transfer RNAs. This Shewanella baltica (strain OS195) protein is tRNA pseudouridine synthase A.